A 469-amino-acid chain; its full sequence is Dihydroorotate dehydrogenase (quinone), mitochondrial (469 aa).

Residues 1–37 constitute a mitochondrion transit peptide; that stretch reads MSSSAAALAWRRSLRDALLRGSAWRGAPAANSAAARL. A helical membrane pass occupies residues 62–82; that stretch reads LLTGAMIGLAIAGGAYVSTAD. Residues 150 to 154 and serine 174 contribute to the FMN site; that span reads AGFDK. Lysine 154 lines the substrate pocket. Substrate is bound at residue 199–203; the sequence is NRCGF. Residues 219–247 are disordered; sequence HGKRKMEETSSSTSPTTSDVKQGGKAGPG. Low complexity predominate over residues 227-236; it reads TSSSTSPTTS. The FMN site is built by asparagine 252 and asparagine 283. 283-288 contacts substrate; that stretch reads NVSSPN. Residue serine 286 is the Nucleophile of the active site. Positions 328 and 356 each coordinate FMN. 357–358 contacts substrate; that stretch reads NT. Residues glycine 380, glycine 409, and 430–431 each bind FMN; that span reads YT.

Belongs to the dihydroorotate dehydrogenase family. Type 2 subfamily. FMN is required as a cofactor.

Its subcellular location is the mitochondrion inner membrane. It carries out the reaction (S)-dihydroorotate + a quinone = orotate + a quinol. The protein operates within pyrimidine metabolism; UMP biosynthesis via de novo pathway; orotate from (S)-dihydroorotate (quinone route): step 1/1. Its function is as follows. Catalyzes the conversion of dihydroorotate to orotate with quinone as electron acceptor. This is Dihydroorotate dehydrogenase (quinone), mitochondrial (PYRD) from Oryza sativa subsp. japonica (Rice).